The chain runs to 123 residues: Small ribosomal subunit protein uS12 (123 aa).

The disordered stretch occupies residues 1 to 45; the sequence is MPTINQLIRKKRQSGATRKKSPALQKSPQKRGVCLQVKTKTPKKP. Residues 8–21 show a composition bias toward basic residues; it reads IRKKRQSGATRKKS.

It belongs to the universal ribosomal protein uS12 family. Part of the 30S ribosomal subunit. Contacts proteins S8 and S17. May interact with IF1 in the 30S initiation complex.

Its function is as follows. With S4 and S5 plays an important role in translational accuracy. Interacts with and stabilizes bases of the 16S rRNA that are involved in tRNA selection in the A site and with the mRNA backbone. Located at the interface of the 30S and 50S subunits, it traverses the body of the 30S subunit contacting proteins on the other side and probably holding the rRNA structure together. The combined cluster of proteins S8, S12 and S17 appears to hold together the shoulder and platform of the 30S subunit. The polypeptide is Small ribosomal subunit protein uS12 (Chlamydia muridarum (strain MoPn / Nigg)).